Reading from the N-terminus, the 921-residue chain is Ubiquitin carboxyl-terminal hydrolase 11 (921 aa).

The segment covering 1-16 has biased composition (low complexity); that stretch reads MAAVAADPAAAAVPAS. The tract at residues 1–29 is disordered; it reads MAAVAADPAAAAVPASAEDRETQPEAMPD. The DUSP domain occupies 28–133; the sequence is PDLDQQWRQI…DQPPIERKVI (106 aa). Lys194 carries the N6-acetyllysine modification. Positions 257–889 constitute a USP domain; the sequence is CGLTNLGNTC…AAYVLFYQRQ (633 aa). Cys266 functions as the Nucleophile in the catalytic mechanism. The interval 592-697 is disordered; the sequence is TKPTSDDDDG…DRTTSPEEAQ (106 aa). Residue Ser596 is modified to Phosphoserine. The span at 597 to 624 shows a compositional bias: acidic residues; that stretch reads DDDDGDEKGDENEDEDVEDDSSSEEEKE. 2 stretches are compositionally biased toward polar residues: residues 657-666 and 676-697; these read LDNSLHTSQW and FTLQ…EEAQ. Ser692 bears the Phosphoserine mark. His847 serves as the catalytic Proton acceptor. The tract at residues 893 to 921 is disordered; it reads RRQSQTASSETPTSPASSSTPNSDIMDVN. The segment covering 895–915 has biased composition (low complexity); that stretch reads QSQTASSETPTSPASSSTPNS. Ser906 is subject to Phosphoserine.

Belongs to the peptidase C19 family. In terms of assembly, monomer. Associated component of the Polycomb group (PcG) multiprotein PRC1-like complex. Interacts with RANBP9/RANBPM. Interacts with BRCA2. Interacts with CHUK/IKKA. Interacts with NFKBIA. Interacts with SPRY3, RAE1, MYCBP2/PAM, and KCTD6.

It localises to the nucleus. The protein resides in the cytoplasm. Its subcellular location is the chromosome. The enzyme catalyses Thiol-dependent hydrolysis of ester, thioester, amide, peptide and isopeptide bonds formed by the C-terminal Gly of ubiquitin (a 76-residue protein attached to proteins as an intracellular targeting signal).. In terms of biological role, protease that can remove conjugated ubiquitin from target proteins and polyubiquitin chains. Inhibits the degradation of target proteins by the proteasome. Cleaves preferentially 'Lys-6' and 'Lys-63'-linked ubiquitin chains. Has lower activity with 'Lys-11' and 'Lys-33'-linked ubiquitin chains, and extremely low activity with 'Lys-27', 'Lys-29' and 'Lys-48'-linked ubiquitin chains (in vitro). Plays a role in the regulation of pathways leading to NF-kappa-B activation. Plays a role in the regulation of DNA repair after double-stranded DNA breaks. Acts as a chromatin regulator via its association with the Polycomb group (PcG) multiprotein PRC1-like complex; may act by deubiquitinating components of the PRC1-like comple. Promotes cell proliferation by deubiquitinating phosphorylated E2F1x. The sequence is that of Ubiquitin carboxyl-terminal hydrolase 11 from Rattus norvegicus (Rat).